The primary structure comprises 549 residues: Glucose-6-phosphate isomerase (549 aa).

Glu-355 acts as the Proton donor in catalysis. Catalysis depends on residues His-386 and Lys-514.

Belongs to the GPI family.

The protein resides in the cytoplasm. It carries out the reaction alpha-D-glucose 6-phosphate = beta-D-fructose 6-phosphate. It participates in carbohydrate biosynthesis; gluconeogenesis. Its pathway is carbohydrate degradation; glycolysis; D-glyceraldehyde 3-phosphate and glycerone phosphate from D-glucose: step 2/4. Its function is as follows. Catalyzes the reversible isomerization of glucose-6-phosphate to fructose-6-phosphate. In Edwardsiella ictaluri (strain 93-146), this protein is Glucose-6-phosphate isomerase.